The chain runs to 72 residues: Large ribosomal subunit protein bL31 (72 aa).

Zn(2+) is bound by residues C17, C19, C37, and C40.

The protein belongs to the bacterial ribosomal protein bL31 family. Type A subfamily. Part of the 50S ribosomal subunit. Zn(2+) serves as cofactor.

Functionally, binds the 23S rRNA. The polypeptide is Large ribosomal subunit protein bL31 (Clostridium botulinum (strain Loch Maree / Type A3)).